The following is a 136-amino-acid chain: Nanos homolog 2 (136 aa).

The disordered stretch occupies residues 27-51 (KQRQEGEVAEEPNSRPQEKSEQDLE). Basic and acidic residues predominate over residues 28 to 48 (QRQEGEVAEEPNSRPQEKSEQ). The Nanos-type zinc finger occupies 60-114 (ICNFCKHNGESRHVYTSHQLKTPEGVVVCPILRHYVCPLCGATGDQAHTLKYCPL). 8 residues coordinate Zn(2+): cysteine 61, cysteine 64, histidine 77, cysteine 88, cysteine 96, cysteine 99, histidine 107, and cysteine 112. Short sequence motifs (C2HC) lie at residues 61–88 (CNFC…VVVC) and 96–112 (CPLC…LKYC).

The protein belongs to the nanos family. In terms of assembly, interacts with CNOT1, CNOT3, CNOT6L, CNOT7 and CNOT9. Predominantly expressed in male germ cells. Expressed in self-renewing spermatogonial stem cells and developing gonads.

It is found in the cytoplasm. Its subcellular location is the P-body. The protein localises to the perinuclear region. Functionally, plays a key role in the sexual differentiation of germ cells by promoting the male fate but suppressing the female fate. Represses the female fate pathways by suppressing meiosis, which in turn results in the promotion of the male fate. Maintains the suppression of meiosis by preventing STRA8 expression, which is required for premeiotic DNA replication, after CYP26B1 is decreased. Regulates the localization of the CCR4-NOT deadenylation complex to P-bodies and plays a role in recruiting the complex to trigger the degradation of mRNAs involved in meiosis. Required for the maintenance of the spermatogonial stem cell population. Not essential for the assembly of P-bodies but is required for the maintenance of their normal state. The protein is Nanos homolog 2 (Nanos2) of Mus musculus (Mouse).